The following is a 450-amino-acid chain: UDP-N-acetylmuramoylalanine--D-glutamate ligase (450 aa).

An ATP-binding site is contributed by 115–121; sequence GTNGKTT.

Belongs to the MurCDEF family.

It is found in the cytoplasm. It catalyses the reaction UDP-N-acetyl-alpha-D-muramoyl-L-alanine + D-glutamate + ATP = UDP-N-acetyl-alpha-D-muramoyl-L-alanyl-D-glutamate + ADP + phosphate + H(+). It participates in cell wall biogenesis; peptidoglycan biosynthesis. Functionally, cell wall formation. Catalyzes the addition of glutamate to the nucleotide precursor UDP-N-acetylmuramoyl-L-alanine (UMA). This is UDP-N-acetylmuramoylalanine--D-glutamate ligase from Lachnospira eligens (strain ATCC 27750 / DSM 3376 / VPI C15-48 / C15-B4) (Eubacterium eligens).